The chain runs to 510 residues: Bifunctional purine biosynthesis protein PurH (510 aa).

Positions 1 to 142 constitute an MGS-like domain; that stretch reads MRALLSVSDK…KNYKDVMVLC (142 aa).

Belongs to the PurH family.

It carries out the reaction (6R)-10-formyltetrahydrofolate + 5-amino-1-(5-phospho-beta-D-ribosyl)imidazole-4-carboxamide = 5-formamido-1-(5-phospho-D-ribosyl)imidazole-4-carboxamide + (6S)-5,6,7,8-tetrahydrofolate. The enzyme catalyses IMP + H2O = 5-formamido-1-(5-phospho-D-ribosyl)imidazole-4-carboxamide. Its pathway is purine metabolism; IMP biosynthesis via de novo pathway; 5-formamido-1-(5-phospho-D-ribosyl)imidazole-4-carboxamide from 5-amino-1-(5-phospho-D-ribosyl)imidazole-4-carboxamide (10-formyl THF route): step 1/1. It functions in the pathway purine metabolism; IMP biosynthesis via de novo pathway; IMP from 5-formamido-1-(5-phospho-D-ribosyl)imidazole-4-carboxamide: step 1/1. In Campylobacter jejuni subsp. doylei (strain ATCC BAA-1458 / RM4099 / 269.97), this protein is Bifunctional purine biosynthesis protein PurH.